Consider the following 199-residue polypeptide: Transgelin-2 (199 aa).

Position 2 is an N-acetylalanine (A2). S11 bears the Phosphoserine mark. N6-acetyllysine occurs at positions 17 and 20. Positions P24–A136 constitute a Calponin-homology (CH) domain. S163 is modified (phosphoserine). A Glycyl lysine isopeptide (Lys-Gly) (interchain with G-Cter in SUMO2) cross-link involves residue K171. A Calponin-like repeat occupies I174 to L199. Position 180 is a phosphothreonine (T180). R182 and R196 each carry omega-N-methylarginine.

It belongs to the calponin family.

The protein is Transgelin-2 (Tagln2) of Rattus norvegicus (Rat).